Consider the following 336-residue polypeptide: Heme A synthase (336 aa).

A run of 8 helical transmembrane segments spans residues 12–32, 97–117, 130–150, 161–181, 194–214, 256–276, 285–305, and 310–330; these read LKLW…VGGL, LLAR…TLYF, IFFL…SGLI, SIHL…ILDI, LFLL…AFLS, FLHR…NFIY, YVLF…ITLI, and ITYA…YFLI. His258 contributes to the heme binding site. His316 contacts heme.

This sequence belongs to the COX15/CtaA family. Type 2 subfamily. In terms of assembly, interacts with CtaB. Requires heme b as cofactor.

The protein localises to the cell membrane. It catalyses the reaction Fe(II)-heme o + 2 A + H2O = Fe(II)-heme a + 2 AH2. It participates in porphyrin-containing compound metabolism; heme A biosynthesis; heme A from heme O: step 1/1. Its function is as follows. Catalyzes the conversion of heme O to heme A by two successive hydroxylations of the methyl group at C8. The first hydroxylation forms heme I, the second hydroxylation results in an unstable dihydroxymethyl group, which spontaneously dehydrates, resulting in the formyl group of heme A. The sequence is that of Heme A synthase from Pelagibacter ubique (strain HTCC1062).